Here is a 181-residue protein sequence, read N- to C-terminus: Protein GrpE (181 aa).

The interval 1 to 21 (MNKEQQDLQTEQEAAVETAEL) is disordered. Positions 8-21 (LQTEQEAAVETAEL) are enriched in low complexity.

This sequence belongs to the GrpE family. As to quaternary structure, homodimer.

Its subcellular location is the cytoplasm. Its function is as follows. Participates actively in the response to hyperosmotic and heat shock by preventing the aggregation of stress-denatured proteins, in association with DnaK and GrpE. It is the nucleotide exchange factor for DnaK and may function as a thermosensor. Unfolded proteins bind initially to DnaJ; upon interaction with the DnaJ-bound protein, DnaK hydrolyzes its bound ATP, resulting in the formation of a stable complex. GrpE releases ADP from DnaK; ATP binding to DnaK triggers the release of the substrate protein, thus completing the reaction cycle. Several rounds of ATP-dependent interactions between DnaJ, DnaK and GrpE are required for fully efficient folding. The sequence is that of Protein GrpE from Trichlorobacter lovleyi (strain ATCC BAA-1151 / DSM 17278 / SZ) (Geobacter lovleyi).